We begin with the raw amino-acid sequence, 87 residues long: Small ribosomal subunit protein uS15 (87 aa).

Belongs to the universal ribosomal protein uS15 family. As to quaternary structure, part of the 30S ribosomal subunit. Forms a bridge to the 50S subunit in the 70S ribosome, contacting the 23S rRNA.

Functionally, one of the primary rRNA binding proteins, it binds directly to 16S rRNA where it helps nucleate assembly of the platform of the 30S subunit by binding and bridging several RNA helices of the 16S rRNA. Its function is as follows. Forms an intersubunit bridge (bridge B4) with the 23S rRNA of the 50S subunit in the ribosome. The sequence is that of Small ribosomal subunit protein uS15 from Clostridium kluyveri (strain NBRC 12016).